The sequence spans 562 residues: Zinc finger protein 579 (562 aa).

Residues Met-1 to Gly-11 show a composition bias toward pro residues. Positions Met-1 to Pro-43 are disordered. Positions His-15–Gly-33 are enriched in basic residues. 3 consecutive C2H2-type zinc fingers follow at residues Leu-44–His-66, His-72–His-94, and Leu-100–His-123. Omega-N-methylarginine is present on Arg-92. Residues Thr-139–Ala-203 form a disordered region. A phosphoserine mark is found at Ser-194 and Ser-196. 2 C2H2-type zinc fingers span residues His-270 to His-292 and Phe-298 to His-320. The disordered stretch occupies residues Ala-327–Ala-379. Gly residues predominate over residues Pro-349–Gly-369. C2H2-type zinc fingers lie at residues Phe-384–His-406, Phe-412–His-434, and His-441–His-463. Residues Gln-477 to Ser-562 are disordered. Pro residues-rich tracts occupy residues Thr-482 to Leu-491 and Pro-512 to Pro-525. Residue Ser-483 is modified to Phosphoserine.

This sequence belongs to the krueppel C2H2-type zinc-finger protein family.

The protein resides in the nucleus. In terms of biological role, may be involved in transcriptional regulation. The protein is Zinc finger protein 579 (ZNF579) of Homo sapiens (Human).